Here is a 2374-residue protein sequence, read N- to C-terminus: Genome polyprotein (2374 aa).

Glycine 115 is lipidated: N-myristoyl glycine; by host. 2 disordered regions span residues glycine 144–valine 176 and glycine 707–proline 739. Residues glycine 157 to asparagine 174 are compositionally biased toward low complexity. The span at alanine 716–threonine 728 shows a compositional bias: polar residues. Positions tyrosine 1361–glutamine 1525 constitute an SF3 helicase domain. Glycine 1387 to serine 1394 lines the ATP pocket. The N-myristoyl glycine; by host moiety is linked to residue glycine 1600. A helical transmembrane segment spans residues isoleucine 1649–leucine 1669. The disordered stretch occupies residues glycine 1677–serine 1699. Tyrosine 1679 is subject to O-(5'-phospho-RNA)-tyrosine. The 190-residue stretch at glycine 1700 to valine 1889 folds into the Peptidase C3 domain. Catalysis depends on for protease 3C activity residues histidine 1748, glutamate 1779, and cysteine 1852. The RdRp catalytic domain maps to serine 2126–glutamate 2243. Catalysis depends on for RdRp activity residues aspartate 2132 and aspartate 2229.

As to quaternary structure, interacts with capsid protein VP1. Interacts with capsid protein VP3. In terms of assembly, interacts with capsid protein VP0. Interacts with capsid protein VP3. Interacts with capsid protein VP0. Interacts with capsid protein VP1. As to quaternary structure, homodimer. Interacts with protein 2B. Interacts with protein 2C. In terms of assembly, homodimer. Interacts with host ABCD3. Interacts with protein 2A. Interacts with host ACBD3. Homodimer. Interacts with host ABCD3. Interacts with protein 2A. Interacts with protein 3A. Interacts with protein 3C. Interacts with host ACBD3. As to quaternary structure, homodimer. Interacts with host ABCD3 (via GOLD domain) and PI4KB; these interactions allow the formation of a viral protein/ACBD3/PI4KB complex in order to synthesize PI4P at the viral RNA replication sites. Interacts with protein 2C. Interacts with protein 3C. Protein 3C: Interacts with protein 2A. Protein 3C: Interacts with protein 2C. Post-translationally, specific enzymatic cleavages by the viral protease in vivo yield a variety of precursors and mature proteins. The leader protein-VP0 junction is cleaved by 3C proteinase. The VP1/2A junction is cleaved by the protein 3CD in association with protein 2A. Uridylylated by the polymerase and is covalently linked to the 5'-end of genomic RNA. This uridylylated form acts as a nucleotide-peptide primer for the polymerase.

It localises to the virion. Its subcellular location is the host cytoplasm. It is found in the host cytoplasmic vesicle membrane. The protein localises to the host Golgi apparatus membrane. It catalyses the reaction Selective cleavage of Gln-|-Gly bond in the poliovirus polyprotein. In other picornavirus reactions Glu may be substituted for Gln, and Ser or Thr for Gly.. The enzyme catalyses RNA(n) + a ribonucleoside 5'-triphosphate = RNA(n+1) + diphosphate. It carries out the reaction ATP + H2O = ADP + phosphate + H(+). Required for viral RNA replication and viral RNA encapsidation. Does not have any proteolytic activity. Its function is as follows. Forms an icosahedral capsid of pseudo T=3 symmetry with capsid proteins VP0 and VP3. Together they form an icosahedral capsid composed of 60 copies of each VP0, VP1, and VP3. All the three latter proteins contain a beta-sheet structure called beta-barrel jelly roll. In terms of biological role, forms an icosahedral capsid of pseudo T=3 symmetry with capsid proteins VP1 and VP3. Together they form an icosahedral capsid composed of 60 copies of each VP0, VP1, and VP3. All the three latter proteins contain a beta-sheet structure called beta-barrel jelly roll. Functionally, forms an icosahedral capsid of pseudo T=3 symmetry with capsid proteins VP0 and VP1. Together they form an icosahedral capsid composed of 60 copies of each VP0, VP1, and VP3. All the three latter proteins contain a beta-sheet structure called beta-barrel jelly roll. Required for viral RNA replication. Does not have any proteolytic activity. Its function is as follows. Affects membrane integrity and causes an increase in membrane permeability. In terms of biological role, induces and associates with structural rearrangements of intracellular membranes. Displays RNA-binding, nucleotide binding and NTPase activities. May play a role in virion morphogenesis and viral RNA encapsidation by interacting with the capsid protein VP3. Functionally, serves as membrane anchor via its hydrophobic domain. Plays an essential role in viral RNA replication by recruiting PI4KB at the viral replication sites, thereby allowing the formation of rearranged membranous structures where viral replication takes place. Forms a primer, VPg-pU, which is utilized by the polymerase for the initiation of RNA chains. Its function is as follows. Cysteine protease that generates mature viral proteins from the precursor polyprotein. In addition to its proteolytic activity, it binds to viral RNA, and thus influences viral genome replication. RNA and substrate cooperatively bind to the protease. In terms of biological role, replicates the genomic and antigenomic RNAs by recognizing replications specific signals. Performs VPg uridylylation. This Salivirus A (isolate Human/Nigeria/NG-J1/2007) (SV-A) protein is Genome polyprotein.